We begin with the raw amino-acid sequence, 192 residues long: NF-kappa-B inhibitor-interacting Ras-like protein 1 (192 aa).

A small GTPase-like region spans residues 1–192; that stretch reads MGKGCKVVVC…KSKGTPSNDI (192 aa). 11 to 18 contributes to the GTP binding site; the sequence is GMASVGKT. The short motif at 35–43 is the Effector region element; sequence TSDTQEDIY. GTP-binding positions include 61-65 and 120-123; these read DTRGL and NKCE. The disordered stretch occupies residues 169-192; the sequence is TQPQSKSAFPLPGRKSKGTPSNDI.

Belongs to the small GTPase superfamily. Ras family. KappaB-Ras subfamily.

The protein resides in the cytoplasm. Atypical Ras-like protein that acts as a potent regulator of NF-kappa-B activity by preventing the degradation of NF-kappa-B inhibitor beta (NFKBIB) by most signals, explaining why NFKBIB is more resistant to degradation. In Danio rerio (Zebrafish), this protein is NF-kappa-B inhibitor-interacting Ras-like protein 1 (nkiras1).